The sequence spans 493 residues: tRNA-2-methylthio-N(6)-dimethylallyladenosine synthase (493 aa).

Residues 1 to 14 (MPMTGLLQTTLSTA) are compositionally biased toward polar residues. A disordered region spans residues 1–31 (MPMTGLLQTTLSTADQDRSGPAATTGDTPAR). Residues 35–155 (KRLHVITWGC…LGGMVRRAMN (121 aa)) form the MTTase N-terminal domain. Residues cysteine 44, cysteine 80, cysteine 118, cysteine 199, cysteine 203, and cysteine 206 each coordinate [4Fe-4S] cluster. Residues 185 to 417 (LAGGRTAFLT…QALLRTQQEA (233 aa)) enclose the Radical SAM core domain. The TRAM domain maps to 420–482 (TACIGKTVNV…TNSLSATLPD (63 aa)).

It belongs to the methylthiotransferase family. MiaB subfamily. Monomer. The cofactor is [4Fe-4S] cluster.

Its subcellular location is the cytoplasm. It catalyses the reaction N(6)-dimethylallyladenosine(37) in tRNA + (sulfur carrier)-SH + AH2 + 2 S-adenosyl-L-methionine = 2-methylsulfanyl-N(6)-dimethylallyladenosine(37) in tRNA + (sulfur carrier)-H + 5'-deoxyadenosine + L-methionine + A + S-adenosyl-L-homocysteine + 2 H(+). Its function is as follows. Catalyzes the methylthiolation of N6-(dimethylallyl)adenosine (i(6)A), leading to the formation of 2-methylthio-N6-(dimethylallyl)adenosine (ms(2)i(6)A) at position 37 in tRNAs that read codons beginning with uridine. The sequence is that of tRNA-2-methylthio-N(6)-dimethylallyladenosine synthase from Granulibacter bethesdensis (strain ATCC BAA-1260 / CGDNIH1).